The chain runs to 238 residues: 3-dehydroquinate dehydratase (238 aa).

Residues 35–37 (ELR) and Arg-70 each bind 3-dehydroquinate. The active-site Proton donor/acceptor is His-133. Lys-160 functions as the Schiff-base intermediate with substrate in the catalytic mechanism. 2 residues coordinate 3-dehydroquinate: Arg-202 and Gln-225.

It belongs to the type-I 3-dehydroquinase family. Homodimer.

The catalysed reaction is 3-dehydroquinate = 3-dehydroshikimate + H2O. It participates in metabolic intermediate biosynthesis; chorismate biosynthesis; chorismate from D-erythrose 4-phosphate and phosphoenolpyruvate: step 3/7. Functionally, involved in the third step of the chorismate pathway, which leads to the biosynthesis of aromatic amino acids. Catalyzes the cis-dehydration of 3-dehydroquinate (DHQ) and introduces the first double bond of the aromatic ring to yield 3-dehydroshikimate. In Staphylococcus aureus (strain USA300), this protein is 3-dehydroquinate dehydratase.